Here is a 354-residue protein sequence, read N- to C-terminus: Uroporphyrinogen decarboxylase (354 aa).

Substrate contacts are provided by residues R27–R31, D77, Y154, T209, and H327.

Belongs to the uroporphyrinogen decarboxylase family. Homodimer.

The protein resides in the cytoplasm. It carries out the reaction uroporphyrinogen III + 4 H(+) = coproporphyrinogen III + 4 CO2. It participates in porphyrin-containing compound metabolism; protoporphyrin-IX biosynthesis; coproporphyrinogen-III from 5-aminolevulinate: step 4/4. Catalyzes the decarboxylation of four acetate groups of uroporphyrinogen-III to yield coproporphyrinogen-III. The chain is Uroporphyrinogen decarboxylase from Salmonella arizonae (strain ATCC BAA-731 / CDC346-86 / RSK2980).